The following is a 127-amino-acid chain: Histone H2B type 1-A (127 aa).

The disordered stretch occupies residues 1–36 (MPEVSSKGATISKKGFKKAVVKTQKKEGKKRKRTRK). P2 carries the post-translational modification N-acetylproline. An N6-acetyllysine; alternate mark is found at K7, K13, K14, K17, K18, K22, and K25. K7, K13, K14, K17, K18, K22, K25, and K36 each carry N6-crotonyllysine; alternate. An N6-lactoyllysine; alternate mark is found at K7 and K13. Residue K7 forms a Glycyl lysine isopeptide (Lys-Gly) (interchain with G-Cter in SUMO2); alternate linkage. N6-lactoyllysine; alternate occurs at positions 17, 18, 22, and 25. K22 participates in a covalent cross-link: Glycyl lysine isopeptide (Lys-Gly) (interchain with G-Cter in SUMO2); alternate. Position 36 is an N6-succinyllysine; alternate (K36). K36 participates in a covalent cross-link: Glycyl lysine isopeptide (Lys-Gly) (interchain with G-Cter in ubiquitin); alternate. Residue S38 is modified to Phosphoserine. K45 carries the post-translational modification N6-lactoyllysine; alternate. The residue at position 48 (K48) is an N6-methyllysine. The residue at position 59 (K59) is an N6,N6-dimethyllysine. Position 81 is a dimethylated arginine (R81). S86 bears the Phosphoserine mark. K87 carries the N6-acetyllysine; alternate modification. K87 carries the N6-lactoyllysine; alternate modification. K87 carries the post-translational modification N6,N6,N6-trimethyllysine; alternate. An omega-N-methylarginine mark is found at R88 and R94. Residue K110 is modified to N6-lactoyllysine; alternate. K110 is modified (N6-methyllysine). T117 is subject to Phosphothreonine. 2 positions are modified to N6-lactoyllysine; alternate: K118 and K122. An N6-succinyllysine; alternate mark is found at K118 and K122. N6-methylated lysine; alternate is present on K118. A Glycyl lysine isopeptide (Lys-Gly) (interchain with G-Cter in ubiquitin); alternate cross-link involves residue K122.

It belongs to the histone H2B family. In terms of assembly, the nucleosome is a histone octamer containing two molecules each of H2A, H2B, H3 and H4 assembled in one H3-H4 heterotetramer and two H2A-H2B heterodimers. In terms of processing, monoubiquitination at Lys-36 (H2BK34Ub) by the MSL1/MSL2 dimer is required for histone H3 'Lys-4' (H3K4me) and 'Lys-79' (H3K79me) methylation and transcription activation at specific gene loci, such as HOXA9 and MEIS1 loci. Similarly, monoubiquitination at Lys-122 (H2BK120Ub) by the RNF20/40 complex gives a specific tag for epigenetic transcriptional activation and is also prerequisite for histone H3 'Lys-4' and 'Lys-79' methylation. It also functions cooperatively with the FACT dimer to stimulate elongation by RNA polymerase II. H2BK120Ub also acts as a regulator of mRNA splicing: deubiquitination by USP49 is required for efficient cotranscriptional splicing of a large set of exons. Post-translationally, crotonylation (Kcr) is specifically present in male germ cells and marks testis-specific genes in post-meiotic cells, including X-linked genes that escape sex chromosome inactivation in haploid cells. Crotonylation marks active promoters and enhancers and confers resistance to transcriptional repressors. It is also associated with post-meiotically activated genes on autosomes. Acetylated during spermatogenesis. Acetylated form is most abundant in spermatogonia compared to spermatocytes and round spermatids. In terms of processing, phosphorylated at Thr-117 in spermatogonia, spermatocytes and round spermatids. Post-translationally, methylated at Lys-118 in spermatogonia, spermatocytes and round spermatids. Lactylated in macrophages by EP300/P300 by using lactoyl-CoA directly derived from endogenous or exogenous lactate, leading to stimulates gene transcription. Mainly expressed in testis, and the corresponding protein is also present in mature sperm (at protein level). Also found in some fat cells.

The protein localises to the nucleus. It is found in the chromosome. Its function is as follows. Variant histone specifically required to direct the transformation of dissociating nucleosomes to protamine in male germ cells. Entirely replaces classical histone H2B prior nucleosome to protamine transition and probably acts as a nucleosome dissociating factor that creates a more dynamic chromatin, facilitating the large-scale exchange of histones. Core component of nucleosome. Nucleosomes wrap and compact DNA into chromatin, limiting DNA accessibility to the cellular machineries which require DNA as a template. Histones thereby play a central role in transcription regulation, DNA repair, DNA replication and chromosomal stability. DNA accessibility is regulated via a complex set of post-translational modifications of histones, also called histone code, and nucleosome remodeling. Also found in fat cells, its function and the presence of post-translational modifications specific to such cells are still unclear. The sequence is that of Histone H2B type 1-A from Homo sapiens (Human).